The primary structure comprises 273 residues: Pyrroline-5-carboxylate reductase (273 aa).

This sequence belongs to the pyrroline-5-carboxylate reductase family.

The protein localises to the cytoplasm. The catalysed reaction is L-proline + NADP(+) = (S)-1-pyrroline-5-carboxylate + NADPH + 2 H(+). It catalyses the reaction L-proline + NAD(+) = (S)-1-pyrroline-5-carboxylate + NADH + 2 H(+). It participates in amino-acid biosynthesis; L-proline biosynthesis; L-proline from L-glutamate 5-semialdehyde: step 1/1. This chain is Pyrroline-5-carboxylate reductase (PROC), found in Pisum sativum (Garden pea).